Reading from the N-terminus, the 171-residue chain is Regulator of ribonuclease activity A (171 aa).

This sequence belongs to the RraA family. As to quaternary structure, homotrimer. Binds to both RNA-binding sites in the C-terminal region of Rne and to RhlB.

It localises to the cytoplasm. Functionally, globally modulates RNA abundance by binding to RNase E (Rne) and regulating its endonucleolytic activity. Can modulate Rne action in a substrate-dependent manner by altering the composition of the degradosome. Modulates RNA-binding and helicase activities of the degradosome. The protein is Regulator of ribonuclease activity A of Vibrio cholerae serotype O1 (strain ATCC 39315 / El Tor Inaba N16961).